A 166-amino-acid polypeptide reads, in one-letter code: Interferon gamma (166 aa).

The signal sequence occupies residues 1-23 (MNYTSFILAFQLCAILGSSTYYC). The residue at position 24 (Gln24) is a Pyrrolidone carboxylic acid. N-linked (GlcNAc...) asparagine glycosylation is found at Asn39 and Asn106. The interval 147–166 (ANLRKRKRSQNPFRGRRALQ) is disordered. A compositionally biased stretch (basic residues) spans 148-166 (NLRKRKRSQNPFRGRRALQ).

Belongs to the type II (or gamma) interferon family. In terms of assembly, homodimer. Interacts with IFNGR1 (via extracellular domain); this interaction promotes IFNGR1 dimerization. In terms of tissue distribution, released primarily from activated T lymphocytes.

The protein localises to the secreted. Functionally, type II interferon produced by immune cells such as T-cells and NK cells that plays crucial roles in antimicrobial, antiviral, and antitumor responses by activating effector immune cells and enhancing antigen presentation. Primarily signals through the JAK-STAT pathway after interaction with its receptor IFNGR1 to affect gene regulation. Upon IFNG binding, IFNGR1 intracellular domain opens out to allow association of downstream signaling components JAK2, JAK1 and STAT1, leading to STAT1 activation, nuclear translocation and transcription of IFNG-regulated genes. Many of the induced genes are transcription factors such as IRF1 that are able to further drive regulation of a next wave of transcription. Plays a role in class I antigen presentation pathway by inducing a replacement of catalytic proteasome subunits with immunoproteasome subunits. In turn, increases the quantity, quality, and repertoire of peptides for class I MHC loading. Increases the efficiency of peptide generation also by inducing the expression of activator PA28 that associates with the proteasome and alters its proteolytic cleavage preference. Up-regulates as well MHC II complexes on the cell surface by promoting expression of several key molecules such as cathepsins B/CTSB, H/CTSH, and L/CTSL. Participates in the regulation of hematopoietic stem cells during development and under homeostatic conditions by affecting their development, quiescence, and differentiation. The chain is Interferon gamma (IFNG) from Equus asinus (Donkey).